The primary structure comprises 97 residues: Signal recognition particle 19 kDa protein (97 aa).

This sequence belongs to the SRP19 family. In terms of assembly, part of the signal recognition particle protein translocation system, which is composed of SRP and FtsY. Archaeal SRP consists of a 7S RNA molecule of 300 nucleotides and two protein subunits: SRP54 and SRP19.

Its subcellular location is the cytoplasm. In terms of biological role, involved in targeting and insertion of nascent membrane proteins into the cytoplasmic membrane. Binds directly to 7S RNA and mediates binding of the 54 kDa subunit of the SRP. The sequence is that of Signal recognition particle 19 kDa protein from Pyrobaculum calidifontis (strain DSM 21063 / JCM 11548 / VA1).